A 286-amino-acid chain; its full sequence is uncharacterized protein (286 aa).

Residues 1–146 (MSRYKKDNDG…KPVDVERGDF (146 aa)) form the Integrase catalytic domain. Over residues 252–263 (RKVKAKKGKKDK) the composition is skewed to basic residues. The segment at 252 to 286 (RKVKAKKGKKDKKLKESKKSDDTSTGASTGSSIAM) is disordered. Residues 264-273 (KLKESKKSDD) are compositionally biased toward basic and acidic residues. Low complexity predominate over residues 274–286 (TSTGASTGSSIAM).

This is an uncharacterized protein from Caenorhabditis elegans.